Reading from the N-terminus, the 352-residue chain is Probable cytosolic iron-sulfur protein assembly protein CIAO1 homolog (352 aa).

WD repeat units lie at residues 12–51 (ASNKRLWSLSWNHKGSVLISSGEDRVIKLWAKCNDQLWGS), 58–97 (AHKKSIRCVTWSPCGTYIASASFDGTVTIWKISEAHSAPE), 106–145 (GHTSEVKCVAWCPSGHLIATCGRDKSVWLWEFDDEEDVQC), 151–190 (PHSQDVKSVAWHPHGEVLVSTSYDNKINVYREELDDWTVF), 195–234 (GHDSTVWKAEFSPSGDILASCSDDLCVKLWSWEGVCGKSS), 245–284 (YHTRTIFDLNWSPDSQLLASCGSDNRLCIYKMPANGLTHI), and 303–352 (AHSE…EYEL).

Belongs to the WD repeat CIA1 family.

Essential component of the cytosolic iron-sulfur (Fe/S) protein assembly machinery. Required for the maturation of extramitochondrial Fe/S proteins. This is Probable cytosolic iron-sulfur protein assembly protein CIAO1 homolog from Schistosoma japonicum (Blood fluke).